Here is a 507-residue protein sequence, read N- to C-terminus: MNKDINIAAIIKNEIENFEGKIQNHDIGKVIIVGDGVALVSGIEKVKFGELVEFENNVLGIALNLEQDLIGVVIMASENSVFQGSIVRRTKSVISITVGDQLLGRVVNALGIPIDGKAELDNSLKSAIFTNAPSIMDRKSVDRGLKTGILAIDSLVPIGKGQRELIIGDRQTGKTTIAIDAILNQKGKNVYCVYVAIGQKNSSVAQIVSLLEKKGALEYTTVILAGASELSPLQYLAPYSGAAIAEYWMNKKKDVLIIYDDLSKHAIAYRTLSLLLRRPPGREAFPGDIFYQHSYLLERSAQLSNDKGGGSITALPIIETQAGDISAYIPTNVISITDGQIFLRDSLFNSGQKPAIDIGLSVSRVGSAAQTNLMKWASSSLKLNLAQYNELKAFAQFGSDLGPSSQLILDRGNKIYEILKQENQYPLTERQQIMLLILIRENLIDSLEQKSIPLFKSAFLKYCDSEPKFRDKIEKMDYNRVLEPNNLAGILKDITDFIEKFNLGNVF.

Residue 168-175 (GDRQTGKT) participates in ATP binding.

This sequence belongs to the ATPase alpha/beta chains family. As to quaternary structure, F-type ATPases have 2 components, CF(1) - the catalytic core - and CF(0) - the membrane proton channel. CF(1) has five subunits: alpha(3), beta(3), gamma(1), delta(1), epsilon(1). CF(0) has three main subunits: a(1), b(2) and c(9-12). The alpha and beta chains form an alternating ring which encloses part of the gamma chain. CF(1) is attached to CF(0) by a central stalk formed by the gamma and epsilon chains, while a peripheral stalk is formed by the delta and b chains.

The protein localises to the cell membrane. The enzyme catalyses ATP + H2O + 4 H(+)(in) = ADP + phosphate + 5 H(+)(out). Produces ATP from ADP in the presence of a proton gradient across the membrane. The alpha chain is a regulatory subunit. In Mesomycoplasma hyopneumoniae (strain 7448) (Mycoplasma hyopneumoniae), this protein is ATP synthase subunit alpha.